Consider the following 319-residue polypeptide: Pyrroline-5-carboxylate reductase 1, mitochondrial (319 aa).

Ser2 is modified (N-acetylserine). Residues Ile6–Leu11 and Ser34 contribute to the NADP(+) site. 9 residues coordinate NADPH: Ala8, Gln10, Leu11, Ser34, Asp36, Asn56, Val70, Lys71, and Ala97. NADP(+) is bound by residues Asn56, Ala69–Pro72, and Cys95–Ala97. Glu164 provides a ligand contact to L-proline. Asn230 is a binding site for NADPH. 2 residues coordinate L-proline: Ala237 and Thr238. Ser278 and Ser301 each carry phosphoserine. The disordered stretch occupies residues Ser294–Asp319.

Belongs to the pyrroline-5-carboxylate reductase family. Homodecamer; composed of 5 homodimers. Interacts with LTO1.

Its subcellular location is the mitochondrion. The catalysed reaction is L-proline + NADP(+) = (S)-1-pyrroline-5-carboxylate + NADPH + 2 H(+). It carries out the reaction L-proline + NAD(+) = (S)-1-pyrroline-5-carboxylate + NADH + 2 H(+). It participates in amino-acid biosynthesis; L-proline biosynthesis; L-proline from L-glutamate 5-semialdehyde: step 1/1. Subject to competitive inhibition by the reaction product proline. Subject to competitive inhibition by stearoyl coenzyme A. Functionally, oxidoreductase that catalyzes the last step in proline biosynthesis, which corresponds to the reduction of pyrroline-5-carboxylate to L-proline using NAD(P)H. At physiologic concentrations, has higher specific activity in the presence of NADH. Involved in the cellular response to oxidative stress. This chain is Pyrroline-5-carboxylate reductase 1, mitochondrial, found in Homo sapiens (Human).